A 1252-amino-acid chain; its full sequence is Elongator complex protein 1 (1252 aa).

The mediates dimerization stretch occupies residues Val814 to Gln1252. Ser1094 is modified (phosphoserine). The interval Ser1097 to Asn1116 is disordered. Over residues Arg1106–Asn1116 the composition is skewed to basic residues. Positions Phe1111–Pro1129 are required for binding to tRNA.

This sequence belongs to the ELP1/IKA1 family. In terms of assembly, homodimer. Component of the elongator complex composed of Elp1, Elp2, Elp3, Elp4, Elp5 and Elp6. The elongator complex associates with and stabilizes microtubules; efficient interaction requires the full complex.

It localises to the cytoplasm. Its subcellular location is the nucleus. The protein resides in the cytoskeleton. It is found in the spindle. The protein operates within tRNA modification; 5-methoxycarbonylmethyl-2-thiouridine-tRNA biosynthesis. In terms of biological role, component of the elongator complex, which is required for multiple tRNA modifications, including mcm5U (5-methoxycarbonylmethyl uridine), mcm5s2U (5-methoxycarbonylmethyl-2-thiouridine), and ncm5U (5-carbamoylmethyl uridine). The elongator complex catalyzes formation of carboxymethyluridine in the wobble base at position 34 in tRNAs. ELP1 binds to tRNA, mediating interaction of the elongator complex with tRNA. Binding by the elongator complex stabilizes microtubules and promotes their growth. This induces central spindle asymmetry, promoting polarized signaling endosome trafficking during asymmetric cell division and cell fate assignation of sensory organ precursor cells. Involved in protein synthesis-dependent long-term memory formation, probably as part of the elongator complex. The chain is Elongator complex protein 1 from Drosophila melanogaster (Fruit fly).